The chain runs to 917 residues: Methionine--tRNA ligase, cytoplasmic (917 aa).

The short motif at 44-54 (PYVNNVPHLGN) is the 'HIGH' region element. Residues 367-371 (KFSKS) carry the 'KMSKS' region motif. Position 370 (K370) interacts with ATP. 2 disordered regions span residues 591–623 (GSQD…GDKK) and 702–749 (SCTP…AAAA). Positions 614-623 (PTKDKKGDKK) are enriched in basic and acidic residues. The span at 702-713 (SCTPTPTSTPAS) shows a compositional bias: low complexity. Over residues 732–741 (EPKKAKEQKK) the composition is skewed to basic and acidic residues. The region spanning 756–857 (DVGRLDMRVG…ADSKPGTPVV (102 aa)) is the tRNA-binding domain.

It belongs to the class-I aminoacyl-tRNA synthetase family.

The protein localises to the cytoplasm. It carries out the reaction tRNA(Met) + L-methionine + ATP = L-methionyl-tRNA(Met) + AMP + diphosphate. The sequence is that of Methionine--tRNA ligase, cytoplasmic from Caenorhabditis elegans.